Reading from the N-terminus, the 266-residue chain is Small ribosomal subunit protein eS1 (266 aa).

The tract at residues 237–266 (DGGSKTGEVGETGSKVDRPEGYEPPVQETV) is disordered.

It belongs to the eukaryotic ribosomal protein eS1 family. Component of the small ribosomal subunit. Mature ribosomes consist of a small (40S) and a large (60S) subunit. The 40S subunit contains about 33 different proteins and 1 molecule of RNA (18S). The 60S subunit contains about 49 different proteins and 3 molecules of RNA (28S, 5.8S and 5S).

The protein localises to the cytoplasm. The protein is Small ribosomal subunit protein eS1 of Lysiphlebus testaceipes (Greenbugs aphid parastoid).